The chain runs to 341 residues: MWLLEKAGYRVRTAEARALQAHPSLVPKRQARGSPSRCNPNVLTPDRIPQFFIPPRLRDPRGAEGRVDRNPGGRNLPVACSLPHLAGREGWAFLPESPHTRRRESLFHGPRGLAAGLAPAQSRLHVSAPDLRLCRAPDSDTASSPDSSPCGSPHTPRPQSLSPDEASSADTSPYAPRRAPPLFHLDFLCCQLRPTKDSVLRLGPRGGQLRLSTEYQAGPGRLRLRLVSAEGLPRPRTRPGSGGGGCCVILRLQPRVRPGAQRSRVVQSSCNPIFNEDFFFEGLRPPDLAVRSLRAKVLDRGAGLRRDVLLGECETPLIALLPPLAGGLGPGSSLAPTHLSL.

Residues 56 to 71 show a composition bias toward basic and acidic residues; the sequence is RLRDPRGAEGRVDRNP. Disordered stretches follow at residues 56 to 75 and 134 to 176; these read RLRDPRGAEGRVDRNPGGRN and CRAP…PYAP. The span at 139–149 shows a compositional bias: low complexity; that stretch reads SDTASSPDSSP. One can recognise a C2 domain in the interval 205 to 331; the sequence is RGGQLRLSTE…PPLAGGLGPG (127 aa).

This is C2 calcium-dependent domain-containing protein 4D (C2cd4d) from Mus musculus (Mouse).